We begin with the raw amino-acid sequence, 433 residues long: Serine hydroxymethyltransferase (433 aa).

Residues Leu132 and 136–138 (GHL) each bind (6S)-5,6,7,8-tetrahydrofolate. Lys241 carries the N6-(pyridoxal phosphate)lysine modification.

It belongs to the SHMT family. In terms of assembly, homodimer. Requires pyridoxal 5'-phosphate as cofactor.

Its subcellular location is the cytoplasm. It carries out the reaction (6R)-5,10-methylene-5,6,7,8-tetrahydrofolate + glycine + H2O = (6S)-5,6,7,8-tetrahydrofolate + L-serine. It functions in the pathway one-carbon metabolism; tetrahydrofolate interconversion. Its pathway is amino-acid biosynthesis; glycine biosynthesis; glycine from L-serine: step 1/1. In terms of biological role, catalyzes the reversible interconversion of serine and glycine with tetrahydrofolate (THF) serving as the one-carbon carrier. This reaction serves as the major source of one-carbon groups required for the biosynthesis of purines, thymidylate, methionine, and other important biomolecules. Also exhibits THF-independent aldolase activity toward beta-hydroxyamino acids, producing glycine and aldehydes, via a retro-aldol mechanism. This chain is Serine hydroxymethyltransferase, found in Bradyrhizobium sp. (strain ORS 278).